A 444-amino-acid chain; its full sequence is CCA-adding enzyme (444 aa).

ATP-binding residues include S57 and R60. Positions 57 and 60 each coordinate CTP. Mg(2+)-binding residues include D69, D71, and D124. Residues H147, K168, and Y177 each coordinate ATP. Residues H147, K168, and Y177 each contribute to the CTP site.

Belongs to the tRNA nucleotidyltransferase/poly(A) polymerase family. Archaeal CCA-adding enzyme subfamily. As to quaternary structure, homodimer. Requires Mg(2+) as cofactor.

The catalysed reaction is a tRNA precursor + 2 CTP + ATP = a tRNA with a 3' CCA end + 3 diphosphate. It carries out the reaction a tRNA with a 3' CCA end + 2 CTP + ATP = a tRNA with a 3' CCACCA end + 3 diphosphate. In terms of biological role, catalyzes the addition and repair of the essential 3'-terminal CCA sequence in tRNAs without using a nucleic acid template. Adds these three nucleotides in the order of C, C, and A to the tRNA nucleotide-73, using CTP and ATP as substrates and producing inorganic pyrophosphate. tRNA 3'-terminal CCA addition is required both for tRNA processing and repair. Also involved in tRNA surveillance by mediating tandem CCA addition to generate a CCACCA at the 3' terminus of unstable tRNAs. While stable tRNAs receive only 3'-terminal CCA, unstable tRNAs are marked with CCACCA and rapidly degraded. This Methanococcus maripaludis (strain C7 / ATCC BAA-1331) protein is CCA-adding enzyme.